Consider the following 241-residue polypeptide: Pyridoxal phosphate phosphatase PHOSPHO2 (241 aa).

The active-site Nucleophile is aspartate 8. Mg(2+) contacts are provided by aspartate 8 and aspartate 10. Aspartate 10 serves as the catalytic Proton donor. Aspartate 19 and aspartate 99 together coordinate substrate. Mg(2+) is bound at residue aspartate 179.

Belongs to the HAD-like hydrolase superfamily. PHOSPHO family. It depends on Mg(2+) as a cofactor.

The catalysed reaction is pyridoxal 5'-phosphate + H2O = pyridoxal + phosphate. Phosphatase that has high activity toward pyridoxal 5'-phosphate (PLP). Also active at much lower level toward pyrophosphate, phosphoethanolamine (PEA), phosphocholine (PCho), phospho-l-tyrosine, fructose-6-phosphate, p-nitrophenyl phosphate, and h-glycerophosphate. This chain is Pyridoxal phosphate phosphatase PHOSPHO2 (Phospho2), found in Rattus norvegicus (Rat).